The primary structure comprises 312 residues: Ribosomal RNA small subunit methyltransferase H (312 aa).

Residues 32–34 (AGH), Asp-52, Phe-79, Asp-100, and Gln-107 contribute to the S-adenosyl-L-methionine site.

It belongs to the methyltransferase superfamily. RsmH family.

The protein localises to the cytoplasm. The enzyme catalyses cytidine(1402) in 16S rRNA + S-adenosyl-L-methionine = N(4)-methylcytidine(1402) in 16S rRNA + S-adenosyl-L-homocysteine + H(+). Functionally, specifically methylates the N4 position of cytidine in position 1402 (C1402) of 16S rRNA. This is Ribosomal RNA small subunit methyltransferase H from Listeria monocytogenes serotype 4b (strain F2365).